A 288-amino-acid polypeptide reads, in one-letter code: Thymidylate synthase (288 aa).

Arg-21 serves as a coordination point for dUMP. His-51 lines the (6R)-5,10-methylene-5,6,7,8-tetrahydrofolate pocket. 150–151 (RR) contacts dUMP. Cys-170 acts as the Nucleophile in catalysis. DUMP contacts are provided by residues 190–193 (RSGD), Asn-201, and 231–233 (HIY). Residue Asp-193 coordinates (6R)-5,10-methylene-5,6,7,8-tetrahydrofolate. Ala-287 is a (6R)-5,10-methylene-5,6,7,8-tetrahydrofolate binding site.

The protein belongs to the thymidylate synthase family. Bacterial-type ThyA subfamily. As to quaternary structure, homodimer.

It localises to the cytoplasm. The enzyme catalyses dUMP + (6R)-5,10-methylene-5,6,7,8-tetrahydrofolate = 7,8-dihydrofolate + dTMP. It functions in the pathway pyrimidine metabolism; dTTP biosynthesis. In terms of biological role, catalyzes the reductive methylation of 2'-deoxyuridine-5'-monophosphate (dUMP) to 2'-deoxythymidine-5'-monophosphate (dTMP) while utilizing 5,10-methylenetetrahydrofolate (mTHF) as the methyl donor and reductant in the reaction, yielding dihydrofolate (DHF) as a by-product. This enzymatic reaction provides an intracellular de novo source of dTMP, an essential precursor for DNA biosynthesis. The sequence is that of Thymidylate synthase from Mycoplasma mobile (strain ATCC 43663 / 163K / NCTC 11711) (Mesomycoplasma mobile).